The primary structure comprises 374 residues: Mannitol-1-phosphate 5-dehydrogenase (374 aa).

3–14 is an NAD(+) binding site; it reads AIHFGAGNIGRG.

It belongs to the mannitol dehydrogenase family.

It carries out the reaction D-mannitol 1-phosphate + NAD(+) = beta-D-fructose 6-phosphate + NADH + H(+). This Halalkalibacterium halodurans (strain ATCC BAA-125 / DSM 18197 / FERM 7344 / JCM 9153 / C-125) (Bacillus halodurans) protein is Mannitol-1-phosphate 5-dehydrogenase.